The following is a 202-amino-acid chain: Small ribosomal subunit protein uS3 (202 aa).

The region spanning 18–87 is the KH type-2 domain; it reads LNEYLQRQLV…NPQIDVVEVP (70 aa).

The protein belongs to the universal ribosomal protein uS3 family. In terms of assembly, part of the 30S ribosomal subunit.

Binds the lower part of the 30S subunit head. This is Small ribosomal subunit protein uS3 from Thermofilum pendens (strain DSM 2475 / Hrk 5).